The chain runs to 136 residues: Large ribosomal subunit protein bL17 (136 aa).

The protein belongs to the bacterial ribosomal protein bL17 family. In terms of assembly, part of the 50S ribosomal subunit. Contacts protein L32.

This is Large ribosomal subunit protein bL17 from Methylobacterium radiotolerans (strain ATCC 27329 / DSM 1819 / JCM 2831 / NBRC 15690 / NCIMB 10815 / 0-1).